A 260-amino-acid polypeptide reads, in one-letter code: Aliphatic sulfonates import ATP-binding protein SsuB 1 (260 aa).

The ABC transporter domain occupies Val-29–Leu-243. Gly-61–Ser-68 contacts ATP.

This sequence belongs to the ABC transporter superfamily. Aliphatic sulfonates importer (TC 3.A.1.17.2) family. As to quaternary structure, the complex is composed of two ATP-binding proteins (SsuB), two transmembrane proteins (SsuC) and a solute-binding protein (SsuA).

The protein localises to the cell membrane. It catalyses the reaction ATP + H2O + aliphatic sulfonate-[sulfonate-binding protein]Side 1 = ADP + phosphate + aliphatic sulfonateSide 2 + [sulfonate-binding protein]Side 1.. Functionally, part of the ABC transporter complex SsuABC involved in aliphatic sulfonates import. Responsible for energy coupling to the transport system. This Streptomyces avermitilis (strain ATCC 31267 / DSM 46492 / JCM 5070 / NBRC 14893 / NCIMB 12804 / NRRL 8165 / MA-4680) protein is Aliphatic sulfonates import ATP-binding protein SsuB 1.